Here is a 460-residue protein sequence, read N- to C-terminus: Muscarinic acetylcholine receptor M1 (460 aa).

The Extracellular portion of the chain corresponds to methionine 1–proline 22. N-linked (GlcNAc...) asparagine glycans are attached at residues asparagine 2 and asparagine 12. Residues tryptophan 23–isoleucine 48 traverse the membrane as a helical segment. The Cytoplasmic segment spans residues serine 49 to tyrosine 62. A helical membrane pass occupies residues phenylalanine 63–threonine 84. Over tyrosine 85 to threonine 95 the chain is Extracellular. Residues leucine 96–phenylalanine 121 form a helical membrane-spanning segment. Cysteine 98 and cysteine 178 are disulfide-bonded. The Cytoplasmic segment spans residues aspartate 122 to alanine 142. The chain crosses the membrane as a helical span at residues alanine 143–tryptophan 164. Residues glutamine 165–glutamine 185 are Extracellular-facing. A helical membrane pass occupies residues proline 186 to tryptophan 209. Residues arginine 210–threonine 366 lie on the Cytoplasmic side of the membrane. Disordered stretches follow at residues leucine 225–cysteine 259, serine 273–glycine 297, and glutamate 310–lysine 351. Threonine 230 carries the phosphothreonine modification. A compositionally biased stretch (low complexity) spans serine 238 to glycine 247. A compositionally biased stretch (basic residues) spans arginine 328 to proline 343. The chain crosses the membrane as a helical span at residues leucine 367 to phenylalanine 390. The Extracellular portion of the chain corresponds to cysteine 391–glutamate 401. A helical transmembrane segment spans residues leucine 402–leucine 420. The Cytoplasmic portion of the chain corresponds to cysteine 421 to cysteine 460. Threonine 428 carries the phosphothreonine modification. Residue serine 451 is modified to Phosphoserine. Threonine 455 is modified (phosphothreonine). Serine 457 bears the Phosphoserine mark.

The protein belongs to the G-protein coupled receptor 1 family. Muscarinic acetylcholine receptor subfamily. CHRM1 sub-subfamily. As to quaternary structure, interacts with GPRASP2. Interacts with TMEM147.

The protein resides in the cell membrane. It localises to the postsynaptic cell membrane. The muscarinic acetylcholine receptor mediates various cellular responses, including inhibition of adenylate cyclase, breakdown of phosphoinositides and modulation of potassium channels through the action of G proteins. Primary transducing effect is Pi turnover. In Macaca mulatta (Rhesus macaque), this protein is Muscarinic acetylcholine receptor M1 (CHRM1).